The following is a 464-amino-acid chain: Kynurenine 3-monooxygenase (464 aa).

The protein belongs to the aromatic-ring hydroxylase family. KMO subfamily. FAD is required as a cofactor.

The catalysed reaction is L-kynurenine + NADPH + O2 + H(+) = 3-hydroxy-L-kynurenine + NADP(+) + H2O. It participates in cofactor biosynthesis; NAD(+) biosynthesis; quinolinate from L-kynurenine: step 1/3. Functionally, catalyzes the hydroxylation of L-kynurenine (L-Kyn) to form 3-hydroxy-L-kynurenine (L-3OHKyn). Required for synthesis of quinolinic acid. The sequence is that of Kynurenine 3-monooxygenase from Myxococcus xanthus (strain DK1622).